A 451-amino-acid polypeptide reads, in one-letter code: Ubiquitin hydrolase B (451 aa).

Residues 19-450 form the USP domain; it reads RGLINTSNTC…EAYLLLYQLV (432 aa). Low complexity predominate over residues 83-115; sequence NNSNSTTTTSSSSTTATTTSTSNNNKSQTPTSP. Residues 83-154 form a disordered region; sequence NNSNSTTTTS…PPINPKHFND (72 aa). Positions 116-135 are enriched in polar residues; that stretch reads IQQHHQSQTNGLSNQPSVAT. The active-site Nucleophile is the H399. H408 serves as the catalytic Proton acceptor.

The protein belongs to the peptidase C19 family. Interacts with mkkA (via F-box/WD40 domains).

The enzyme catalyses Thiol-dependent hydrolysis of ester, thioester, amide, peptide and isopeptide bonds formed by the C-terminal Gly of ubiquitin (a 76-residue protein attached to proteins as an intracellular targeting signal).. In terms of biological role, required for proper prespore cell patterning. Plays a role in stabilizing mkkA by preventing it from being targeted for degradation. ubcB and ubpB differentially control ubiquitination/deubiquitination and degradation of mkkA in a cell-type-specific and temporally regulated manner. The polypeptide is Ubiquitin hydrolase B (ubpB) (Dictyostelium discoideum (Social amoeba)).